The sequence spans 105 residues: Pyrimidine/purine nucleoside phosphorylase (105 aa).

Belongs to the nucleoside phosphorylase PpnP family.

It carries out the reaction a purine D-ribonucleoside + phosphate = a purine nucleobase + alpha-D-ribose 1-phosphate. The catalysed reaction is adenosine + phosphate = alpha-D-ribose 1-phosphate + adenine. It catalyses the reaction cytidine + phosphate = cytosine + alpha-D-ribose 1-phosphate. The enzyme catalyses guanosine + phosphate = alpha-D-ribose 1-phosphate + guanine. It carries out the reaction inosine + phosphate = alpha-D-ribose 1-phosphate + hypoxanthine. The catalysed reaction is thymidine + phosphate = 2-deoxy-alpha-D-ribose 1-phosphate + thymine. It catalyses the reaction uridine + phosphate = alpha-D-ribose 1-phosphate + uracil. The enzyme catalyses xanthosine + phosphate = alpha-D-ribose 1-phosphate + xanthine. Its function is as follows. Catalyzes the phosphorolysis of diverse nucleosides, yielding D-ribose 1-phosphate and the respective free bases. Can use uridine, adenosine, guanosine, cytidine, thymidine, inosine and xanthosine as substrates. Also catalyzes the reverse reactions. The chain is Pyrimidine/purine nucleoside phosphorylase from Anaeromyxobacter sp. (strain Fw109-5).